A 249-amino-acid polypeptide reads, in one-letter code: Coproheme decarboxylase (249 aa).

Residues Arg-131, 145-149, His-172, and Gln-185 each bind Fe-coproporphyrin III; that span reads YPMDK. The active site involves Tyr-145.

Belongs to the ChdC family. Type 1 subfamily. The cofactor is Fe-coproporphyrin III.

It catalyses the reaction Fe-coproporphyrin III + 2 H2O2 + 2 H(+) = heme b + 2 CO2 + 4 H2O. The enzyme catalyses Fe-coproporphyrin III + H2O2 + H(+) = harderoheme III + CO2 + 2 H2O. The catalysed reaction is harderoheme III + H2O2 + H(+) = heme b + CO2 + 2 H2O. It participates in porphyrin-containing compound metabolism; protoheme biosynthesis. Its function is as follows. Involved in coproporphyrin-dependent heme b biosynthesis. Catalyzes the decarboxylation of Fe-coproporphyrin III (coproheme) to heme b (protoheme IX), the last step of the pathway. The reaction occurs in a stepwise manner with a three-propionate intermediate. The polypeptide is Coproheme decarboxylase (Staphylococcus epidermidis (strain ATCC 12228 / FDA PCI 1200)).